Here is a 383-residue protein sequence, read N- to C-terminus: Cobalt-precorrin-5B C(1)-methyltransferase (383 aa).

Belongs to the CbiD family.

The enzyme catalyses Co-precorrin-5B + S-adenosyl-L-methionine = Co-precorrin-6A + S-adenosyl-L-homocysteine. It participates in cofactor biosynthesis; adenosylcobalamin biosynthesis; cob(II)yrinate a,c-diamide from sirohydrochlorin (anaerobic route): step 6/10. Its function is as follows. Catalyzes the methylation of C-1 in cobalt-precorrin-5B to form cobalt-precorrin-6A. This Prochlorococcus marinus (strain MIT 9313) protein is Cobalt-precorrin-5B C(1)-methyltransferase.